The primary structure comprises 432 residues: Short/branched chain specific acyl-CoA dehydrogenase, mitochondrial (432 aa).

The transit peptide at 1–33 (MEGLAVRLLRGSRLLRRNFPTCLSSWKIPPHVS) directs the protein to the mitochondrion. K70 carries the N6-acetyllysine; alternate modification. Position 70 is an N6-succinyllysine; alternate (K70). Residues 174–183 (FCLSEAGAGS) and 207–209 (WIS) each bind FAD. Position 183 (S183) interacts with substrate. S183 carries the phosphoserine modification. Residues Y229 and Y283 each coordinate substrate. K284 bears the N6-acetyllysine; alternate mark. N6-succinyllysine; alternate is present on K284. 291 to 294 (NEGR) contributes to the substrate binding site. FAD contacts are provided by residues R319, Q330, and 387–391 (EWMGG). E414 functions as the Proton acceptor in the catalytic mechanism. Residue 416–418 (ASN) coordinates FAD. K426 carries the N6-acetyllysine modification.

Belongs to the acyl-CoA dehydrogenase family. Homotetramer. Requires FAD as cofactor.

It localises to the mitochondrion matrix. The catalysed reaction is 2-methylbutanoyl-CoA + oxidized [electron-transfer flavoprotein] + H(+) = (2E)-2-methylbut-2-enoyl-CoA + reduced [electron-transfer flavoprotein]. The enzyme catalyses (2S)-2-methylbutanoyl-CoA + oxidized [electron-transfer flavoprotein] + H(+) = (2E)-2-methylbut-2-enoyl-CoA + reduced [electron-transfer flavoprotein]. It catalyses the reaction (2R)-2-methylbutanoyl-CoA + oxidized [electron-transfer flavoprotein] + H(+) = ethylacryloyl-CoA + reduced [electron-transfer flavoprotein]. It carries out the reaction butanoyl-CoA + oxidized [electron-transfer flavoprotein] + H(+) = (2E)-butenoyl-CoA + reduced [electron-transfer flavoprotein]. The catalysed reaction is 2-methylpropanoyl-CoA + oxidized [electron-transfer flavoprotein] + H(+) = 2-methylpropenoyl-CoA + reduced [electron-transfer flavoprotein]. The enzyme catalyses hexanoyl-CoA + oxidized [electron-transfer flavoprotein] + H(+) = (2E)-hexenoyl-CoA + reduced [electron-transfer flavoprotein]. It catalyses the reaction valproyl-CoA + oxidized [electron-transfer flavoprotein] + H(+) = (2E)-2-propylpent-2-enoyl-CoA + reduced [electron-transfer flavoprotein]. It participates in lipid metabolism; mitochondrial fatty acid beta-oxidation. It functions in the pathway amino-acid degradation; L-isoleucine degradation. Its function is as follows. Short and branched chain specific acyl-CoA dehydrogenase that catalyzes the removal of one hydrogen from C-2 and C-3 of the fatty acyl-CoA thioester, resulting in the formation of trans-2-enoyl-CoA. Among the different mitochondrial acyl-CoA dehydrogenases, acts specifically on short and branched chain acyl-CoA derivatives such as (S)-2-methylbutyryl-CoA as well as short straight chain acyl-CoAs such as butyryl-CoA. Plays an important role in the metabolism of L-isoleucine by catalyzing the dehydrogenation of 2-methylbutyryl-CoA, one of the steps of the L-isoleucine catabolic pathway. Can also act on valproyl-CoA, a metabolite of the valproic acid drug. The sequence is that of Short/branched chain specific acyl-CoA dehydrogenase, mitochondrial (ACADSB) from Pongo abelii (Sumatran orangutan).